Consider the following 80-residue polypeptide: MATKKPENLSFEQALEELTTIVSEMEQGDLSLEQSLKQFERGIALAGASSSKLQQAEQKVAILMGKDEKSVLTDFDNDME.

It belongs to the XseB family. As to quaternary structure, heterooligomer composed of large and small subunits.

The protein localises to the cytoplasm. The catalysed reaction is Exonucleolytic cleavage in either 5'- to 3'- or 3'- to 5'-direction to yield nucleoside 5'-phosphates.. In terms of biological role, bidirectionally degrades single-stranded DNA into large acid-insoluble oligonucleotides, which are then degraded further into small acid-soluble oligonucleotides. This is Exodeoxyribonuclease 7 small subunit from Pseudoalteromonas translucida (strain TAC 125).